A 309-amino-acid polypeptide reads, in one-letter code: NAD kinase 2 (309 aa).

The Proton acceptor role is filled by Asp81. NAD(+)-binding positions include 81–82, 155–156, Asp185, 196–201, and Asn255; these read DG, NE, and TAYALS.

The protein belongs to the NAD kinase family. Requires a divalent metal cation as cofactor.

It is found in the cytoplasm. It catalyses the reaction NAD(+) + ATP = ADP + NADP(+) + H(+). Involved in the regulation of the intracellular balance of NAD and NADP, and is a key enzyme in the biosynthesis of NADP. Catalyzes specifically the phosphorylation on 2'-hydroxyl of the adenosine moiety of NAD to yield NADP. The chain is NAD kinase 2 from Gloeobacter violaceus (strain ATCC 29082 / PCC 7421).